Consider the following 344-residue polypeptide: MGCNPPYLLPYRLRLLLFFTLCLTVVGWVTSNYFVDPIQVIPKAKVFMASFYKVIPLGKEETLVHDATMEKVELGNCPSVSPNLRGQSKLIFEPDLTLEEVQAKNPKVSGGRYHPEECKAVQRVAVLIPHRNREKHLTYLLEHLHPFLQRQQLDYGIYIIHQTGSKKFNRAKLLNVGYLEALKEQNWDCFIFHDVDLVPENDFNLYTCGDQPKHLVVGRNSTGYRLRYSKYFGGVTALSREQFFKVNGFSNNYWGWGGEDDDLRLRVELHKMKISRPNPDVGKYTMIFHTRDKGNEVNVDRMKLLHQMSRVWKTDGLSSCSYRLLSVEHNPLYTNITVDFWTGV.

The Cytoplasmic segment spans residues 1–12 (MGCNPPYLLPYR). The helical; Signal-anchor for type II membrane protein transmembrane segment at 13-38 (LRLLLFFTLCLTVVGWVTSNYFVDPI) threads the bilayer. Topologically, residues 39 to 344 (QVIPKAKVFM…NITVDFWTGV (306 aa)) are lumenal. C77 and C118 are oxidised to a cystine. UDP-alpha-D-galactose-binding positions include 129-133 (PHRNR), 168-170 (FNR), and 195-196 (VD). An intrachain disulfide couples C189 to C208. Residue D196 participates in Mn(2+) binding. N-linked (GlcNAc...) asparagine glycosylation occurs at N220. Residues Y224 and W256 each coordinate UDP-alpha-D-galactose. An N-acetyl-D-glucosamine-binding site is contributed by 258 to 261 (GEDD). H289 provides a ligand contact to Mn(2+). 289 to 291 (HTR) provides a ligand contact to UDP-alpha-D-galactose. N-acetyl-D-glucosamine is bound at residue R301. An N-linked (GlcNAc...) asparagine glycan is attached at N335.

It belongs to the glycosyltransferase 7 family. Mn(2+) is required as a cofactor.

It is found in the golgi apparatus. It localises to the golgi stack membrane. The enzyme catalyses N-acetyl-D-glucosamine + UDP-alpha-D-galactose = beta-D-galactosyl-(1-&gt;4)-N-acetyl-D-glucosamine + UDP + H(+). It catalyses the reaction a beta-D-GlcNAc-(1-&gt;3)-beta-D-Gal-(1-&gt;4)-beta-D-Glc-(1&lt;-&gt;1)-Cer(d18:1(4E)) + UDP-alpha-D-galactose = a neolactoside nLc4Cer(d18:1(4E)) + UDP + H(+). It participates in protein modification; protein glycosylation. Functionally, galactose (Gal) transferase involved in the biosynthesis of glycoproteins, proteoglycans, and glycosyphingolipids. Catalyzes the transfer of Gal residue via a beta1-&gt;4 linkage from UDP-Gal to the non-reducing terminal N-acetyl glucosamine 6-O-sulfate (6-O-sulfoGlcNAc) in the linearly growing chain of both N- and O-linked keratan sulfate proteoglycans. Cooperates with B3GNT7 N-acetyl glucosamine transferase and CHST6 and CHST1 sulfotransferases to construct and elongate mono- and disulfated disaccharide units [-&gt;3Galbeta1-&gt;4(6-sulfoGlcNAcbeta)1-&gt;] and [-&gt;3(6-sulfoGalbeta)1-&gt;4(6-sulfoGlcNAcbeta)1-&gt;] within keratan sulfate polymer. The chain is Beta-1,4-galactosyltransferase 4 (B4GALT4) from Cricetulus griseus (Chinese hamster).